The primary structure comprises 209 residues: Orotate phosphoribosyltransferase (209 aa).

5-phospho-alpha-D-ribose 1-diphosphate contacts are provided by residues R96, K100, H102, and E122–S130. An orotate-binding site is contributed by S126.

It belongs to the purine/pyrimidine phosphoribosyltransferase family. PyrE subfamily. As to quaternary structure, homodimer. The cofactor is Mg(2+).

It carries out the reaction orotidine 5'-phosphate + diphosphate = orotate + 5-phospho-alpha-D-ribose 1-diphosphate. It functions in the pathway pyrimidine metabolism; UMP biosynthesis via de novo pathway; UMP from orotate: step 1/2. Catalyzes the transfer of a ribosyl phosphate group from 5-phosphoribose 1-diphosphate to orotate, leading to the formation of orotidine monophosphate (OMP). The polypeptide is Orotate phosphoribosyltransferase (Streptococcus pyogenes serotype M1).